We begin with the raw amino-acid sequence, 105 residues long: UPF0145 protein Mevan_1624 (105 aa).

Belongs to the UPF0145 family.

This chain is UPF0145 protein Mevan_1624, found in Methanococcus vannielii (strain ATCC 35089 / DSM 1224 / JCM 13029 / OCM 148 / SB).